Reading from the N-terminus, the 149-residue chain is MAEQLTEEQIAEFKEAFSLFDKDGDGCITTKELGTVMRSLGQNPTEAELQDMISEVDADQNGTIDFPEFLNLMARKMKDTDSEEELKEAFKVFDKDQNGFISAAELRHVMTNLGEKLTDEEVDEMIREADIDGDGQVNYEEFVRMMLAK.

A2 is modified (N-acetylalanine). EF-hand domains are found at residues 8–43 (EQIAEFKEAFSLFDKDGDGCITTKELGTVMRSLGQN), 44–79 (PTEAELQDMISEVDADQNGTIDFPEFLNLMARKMKD), 81–116 (DSEEELKEAFKVFDKDQNGFISAAELRHVMTNLGEK), and 117–149 (LTDEEVDEMIREADIDGDGQVNYEEFVRMMLAK). Residues D21, D23, D25, C27, E32, D57, D59, N61, T63, E68, D94, D96, N98, and E105 each contribute to the Ca(2+) site. K116 is modified (N6,N6,N6-trimethyllysine). Ca(2+)-binding residues include D130, D132, D134, Q136, and E141.

Belongs to the calmodulin family.

Its function is as follows. Calmodulin mediates the control of a large number of enzymes, ion channels and other proteins by Ca(2+). Among the enzymes to be stimulated by the calmodulin-Ca(2+) complex are a number of protein kinases and phosphatases. In Solanum lycopersicum (Tomato), this protein is Calmodulin (CALM1).